A 214-amino-acid chain; its full sequence is ATP-dependent Clp protease proteolytic subunit (214 aa).

The Nucleophile role is filled by S113. H138 is an active-site residue.

It belongs to the peptidase S14 family. As to quaternary structure, fourteen ClpP subunits assemble into 2 heptameric rings which stack back to back to give a disk-like structure with a central cavity, resembling the structure of eukaryotic proteasomes.

The protein localises to the cytoplasm. It carries out the reaction Hydrolysis of proteins to small peptides in the presence of ATP and magnesium. alpha-casein is the usual test substrate. In the absence of ATP, only oligopeptides shorter than five residues are hydrolyzed (such as succinyl-Leu-Tyr-|-NHMec, and Leu-Tyr-Leu-|-Tyr-Trp, in which cleavage of the -Tyr-|-Leu- and -Tyr-|-Trp bonds also occurs).. In terms of biological role, cleaves peptides in various proteins in a process that requires ATP hydrolysis. Has a chymotrypsin-like activity. Plays a major role in the degradation of misfolded proteins. The protein is ATP-dependent Clp protease proteolytic subunit of Teredinibacter turnerae (strain ATCC 39867 / T7901).